A 505-amino-acid polypeptide reads, in one-letter code: Cobyric acid synthase (505 aa).

Residues Asp251–Phe444 form the GATase cobBQ-type domain. Cys332 (nucleophile) is an active-site residue. Residue His436 is part of the active site.

It belongs to the CobB/CobQ family. CobQ subfamily.

The protein operates within cofactor biosynthesis; adenosylcobalamin biosynthesis. Functionally, catalyzes amidations at positions B, D, E, and G on adenosylcobyrinic A,C-diamide. NH(2) groups are provided by glutamine, and one molecule of ATP is hydrogenolyzed for each amidation. This is Cobyric acid synthase from Clostridium novyi (strain NT).